Consider the following 189-residue polypeptide: Anthranilate synthase component 2 (189 aa).

The Glutamine amidotransferase type-1 domain maps to M1–S189. G52–G54 contributes to the L-glutamine binding site. The active-site Nucleophile; for GATase activity is C79. L-glutamine contacts are provided by residues Q83 and S129–L130. Catalysis depends on residues H169 and E171.

Tetramer of two components I and two components II.

Its subcellular location is the plastid. It localises to the chloroplast. The catalysed reaction is chorismate + L-glutamine = anthranilate + pyruvate + L-glutamate + H(+). Its pathway is amino-acid biosynthesis; L-tryptophan biosynthesis; L-tryptophan from chorismate: step 1/5. The polypeptide is Anthranilate synthase component 2 (trpG) (Pyropia yezoensis (Susabi-nori)).